The primary structure comprises 314 residues: tRNA-cytidine(32) 2-sulfurtransferase (314 aa).

Residues 39–44 (SGGKDS) carry the PP-loop motif motif. Residues Cys-114, Cys-117, and Cys-205 each coordinate [4Fe-4S] cluster.

Belongs to the TtcA family. Homodimer. Mg(2+) is required as a cofactor. It depends on [4Fe-4S] cluster as a cofactor.

Its subcellular location is the cytoplasm. It catalyses the reaction cytidine(32) in tRNA + S-sulfanyl-L-cysteinyl-[cysteine desulfurase] + AH2 + ATP = 2-thiocytidine(32) in tRNA + L-cysteinyl-[cysteine desulfurase] + A + AMP + diphosphate + H(+). It functions in the pathway tRNA modification. In terms of biological role, catalyzes the ATP-dependent 2-thiolation of cytidine in position 32 of tRNA, to form 2-thiocytidine (s(2)C32). The sulfur atoms are provided by the cysteine/cysteine desulfurase (IscS) system. The polypeptide is tRNA-cytidine(32) 2-sulfurtransferase (Cupriavidus metallidurans (strain ATCC 43123 / DSM 2839 / NBRC 102507 / CH34) (Ralstonia metallidurans)).